The following is a 492-amino-acid chain: Tumor necrosis factor receptor superfamily member 8 (492 aa).

Residues 1 to 18 (MSILLKAAGLLFLGMLQA) form the signal peptide. At 19–282 (FPKDRPLDTT…STGTPFLDPG (264 aa)) the chain is on the extracellular side. TNFR-Cys repeat units lie at residues 57-104 (PCPQ…PRIC) and 105-141 (ECQPGMYCSTPAVNSCARCSEKTVVKFPDTAEKNTIC). Intrachain disulfides connect Cys-58–Cys-80, Cys-83–Cys-96, Cys-86–Cys-104, and Cys-123–Cys-141. The tract at residues 141 to 178 (CDLPSPGSGPNGSNPDDCKTLTSHTTPQAIPTLESPAN) is disordered. The span at 144-155 (PSPGSGPNGSNP) shows a compositional bias: low complexity. Asn-151, Asn-178, and Asn-224 each carry an N-linked (GlcNAc...) asparagine glycan. Residues 160 to 178 (TLTSHTTPQAIPTLESPAN) are compositionally biased toward polar residues. Residues 283–303 (SMLFWVAMVVLLVGSASFLLC) traverse the membrane as a helical segment. The Cytoplasmic portion of the chain corresponds to 304-492 (YWKACRRRFQ…DHEPTTVSEK (189 aa)). Residues Ser-334 and Ser-348 each carry the phosphoserine modification. 2 disordered regions span residues 336-366 (PTEKLTQLQRSGSVTDSSAGHTLSPLSPPAV) and 432-492 (PEGR…VSEK). Over residues 339 to 360 (KLTQLQRSGSVTDSSAGHTLSP) the composition is skewed to polar residues. 2 stretches are compositionally biased toward basic and acidic residues: residues 450 to 459 (EVDHTPHYPE) and 478 to 492 (EGGKEDHEPTTVSEK).

Belongs to the TNFR8 family. As to quaternary structure, interacts with TRAF1, TRAF2, TRAF3 and TRAF5. In terms of tissue distribution, very low level of expression. Detected in spleen, thymus and lung. Highly expressed in HTLV-1 infected T-cell lines.

It localises to the cell membrane. Receptor for TNFSF8/CD30L. May play a role in the regulation of cellular growth and transformation of activated lymphoblasts. Regulates gene expression through activation of NF-kappa-B. This Rattus norvegicus (Rat) protein is Tumor necrosis factor receptor superfamily member 8.